The following is a 238-amino-acid chain: Probable 2-phosphosulfolactate phosphatase (238 aa).

It belongs to the ComB family. Mg(2+) is required as a cofactor.

The enzyme catalyses (2R)-O-phospho-3-sulfolactate + H2O = (2R)-3-sulfolactate + phosphate. The chain is Probable 2-phosphosulfolactate phosphatase from Clostridium botulinum (strain Alaska E43 / Type E3).